A 527-amino-acid chain; its full sequence is Glutamate--cysteine ligase (527 aa).

It belongs to the glutamate--cysteine ligase type 1 family. Type 1 subfamily.

It catalyses the reaction L-cysteine + L-glutamate + ATP = gamma-L-glutamyl-L-cysteine + ADP + phosphate + H(+). It functions in the pathway sulfur metabolism; glutathione biosynthesis; glutathione from L-cysteine and L-glutamate: step 1/2. This chain is Glutamate--cysteine ligase, found in Bordetella petrii (strain ATCC BAA-461 / DSM 12804 / CCUG 43448).